The sequence spans 433 residues: Adenylosuccinate synthetase (433 aa).

GTP is bound by residues glycine 11–lysine 17 and glycine 39–threonine 41. Aspartate 12 functions as the Proton acceptor in the catalytic mechanism. Mg(2+) is bound by residues aspartate 12 and glycine 39. IMP-binding positions include aspartate 12–lysine 15, asparagine 37–histidine 40, threonine 134, arginine 148, asparagine 230, threonine 245, and arginine 309. The active-site Proton donor is histidine 40. Valine 305–arginine 311 contacts substrate. GTP-binding positions include arginine 311, lysine 337–aspartate 339, and glycine 419–glycine 421.

This sequence belongs to the adenylosuccinate synthetase family. As to quaternary structure, homodimer. Mg(2+) is required as a cofactor.

The protein resides in the cytoplasm. The enzyme catalyses IMP + L-aspartate + GTP = N(6)-(1,2-dicarboxyethyl)-AMP + GDP + phosphate + 2 H(+). The protein operates within purine metabolism; AMP biosynthesis via de novo pathway; AMP from IMP: step 1/2. Plays an important role in the de novo pathway and in the salvage pathway of purine nucleotide biosynthesis. Catalyzes the first committed step in the biosynthesis of AMP from IMP. The protein is Adenylosuccinate synthetase of Saccharomyces cerevisiae (strain JAY291) (Baker's yeast).